Here is a 1476-residue protein sequence, read N- to C-terminus: Copper-transporting ATPase 1 (1476 aa).

Residues Met1–Ser642 lie on the Cytoplasmic side of the membrane. 2 HMA domains span residues Asn8–Leu74 and Thr85–Gly151. Cu(+) contacts are provided by Thr18, Cys19, and Cys22. A Phosphothreonine modification is found at Thr152. HMA domains are found at residues Val171–Phe237 and Ser276–Tyr342. Cu(+)-binding residues include Cys182, Cys185, Cys287, and Cys290. At Thr326 the chain carries Phosphothreonine. Phosphoserine is present on residues Ser338, Ser352, Ser356, and Ser361. 3 consecutive HMA domains span residues Gln376 to Val442, Ser478 to Thr544, and Gly554 to Ser620. Cu(+)-binding residues include Cys387, Cys390, Cys489, Cys492, Cys565, and Cys568. The helical transmembrane segment at Ser643 to Glu665 threads the bilayer. N-linked (GlcNAc...) asparagine glycans are attached at residues Asn674 and Asn685. Transmembrane regions (helical) follow at residues Ile695–Gly717, Met736–Tyr760, and Ser770–Glu788. A glycan (N-linked (GlcNAc...) asparagine) is linked at Asn887. The chain crosses the membrane as a helical span at residues Tyr930–Gln952. A glycan (N-linked (GlcNAc...) asparagine) is linked at Asn953. The chain crosses the membrane as a helical span at residues Ala978 to Thr998. Asp1034 (4-aspartylphosphate intermediate) is an active-site residue. N-linked (GlcNAc...) asparagine glycans are attached at residues Asn1130 and Asn1134. The next 2 membrane-spanning stretches (helical) occupy residues Ile1347 to Val1373 and Gly1379 to Leu1397. Residues Ser1420 and Ser1422 each carry the phosphoserine modification. The N-linked (GlcNAc...) asparagine glycan is linked to Asn1448. A phosphoserine mark is found at Ser1450, Ser1453, Ser1456, Ser1459, Ser1463, Ser1466, and Ser1476.

It belongs to the cation transport ATPase (P-type) (TC 3.A.3) family. As to quaternary structure, monomer. Interacts with PDZD11. Interacts with ATOX1 and COMMD1. Interacts with TYRP1. Directly interacts with SOD3; this interaction is copper-dependent and is required for SOD3 activity. As to expression, expressed in most tissues except liver.

Its subcellular location is the golgi apparatus. It localises to the trans-Golgi network membrane. The protein localises to the cell membrane. The enzyme catalyses Cu(+)(in) + ATP + H2O = Cu(+)(out) + ADP + phosphate + H(+). In terms of biological role, may function in the export of copper from the cytoplasm to an intracellular organelle. It may serve as well for the export of other metals. The chain is Copper-transporting ATPase 1 (ATP7A) from Cricetulus griseus (Chinese hamster).